Consider the following 620-residue polypeptide: Chaperone protein HscA homolog (620 aa).

Belongs to the heat shock protein 70 family.

Chaperone involved in the maturation of iron-sulfur cluster-containing proteins. Has a low intrinsic ATPase activity which is markedly stimulated by HscB. The polypeptide is Chaperone protein HscA homolog (Shewanella loihica (strain ATCC BAA-1088 / PV-4)).